The sequence spans 41 residues: Diuretic hormone 1 (41 aa).

Isoleucine 41 bears the Isoleucine amide mark.

It localises to the secreted. Functionally, regulation of fluid secretion. May stimulate primary urine secretion by Malpighian tubules and causes a dose-dependent stimulation of cAMP levels in the tubules. The polypeptide is Diuretic hormone 1 (Hyles lineata (White-lined sphinx moth)).